The following is a 522-amino-acid chain: Sorting nexin-1 (522 aa).

Residues 1-144 (MASGGGGCSA…EEEEQEDQFD (144 aa)) form a disordered region. Phosphoserine is present on residues Ser32 and Ser39. Residues 35–45 (EAGDSDTEGED) show a composition bias toward acidic residues. Phosphothreonine is present on residues Thr41 and Thr48. Positions 55–65 (KPQSPKKTTSL) are enriched in polar residues. Phosphoserine occurs at positions 58 and 72. The segment covering 71 to 80 (GSKENGIHED) has biased composition (basic and acidic residues). The span at 98-125 (LDSTQNNQKTMPGKTLTSHSPQEATNSP) shows a compositional bias: polar residues. The segment covering 132 to 143 (EELEEEEQEDQF) has biased composition (acidic residues). Positions 143-272 (FDLTVGITDP…EFLEKEELPR (130 aa)) constitute a PX domain. Positions 186, 188, and 214 each coordinate a 1,2-diacyl-sn-glycero-3-phospho-(1D-myo-inositol-3-phosphate). Ser188 is modified (phosphoserine). Lys237 carries the post-translational modification N6-acetyllysine. Arg238 is an a 1,2-diacyl-sn-glycero-3-phospho-(1D-myo-inositol-3-phosphate) binding site. Ser280 is modified (phosphoserine). Residues 281–298 (GAGLLKMFNKATDAVSKM) form a membrane-binding amphipathic helix region. In terms of domain architecture, BAR spans 302-522 (MNESDIWFEE…AFLPEAKAIS (221 aa)).

The protein belongs to the sorting nexin family. Predominantly forms heterodimers with BAR domain-containing sorting nexins SNX5, SNX6 and SNX32. Can self-associate to form homodimers. The heterodimers are proposed to self-assemble into helical arrays on the membrane to stabilize and expand local membrane curvature underlying endosomal tubule formation. Thought to be a component of the originally described retromer complex (also called SNX-BAR retromer) which is a pentamer containing the heterotrimeric retromer cargo-selective complex (CSC), also described as vacuolar protein sorting subcomplex (VPS) and a heterodimeric membrane-deforming subcomplex formed between SNX1 or SNX2 and SNX5 or SNX6 (also called SNX-BAR subcomplex); the respective CSC and SNX-BAR subcomplexes associate with low affinity. Interacts with SNX5, SNX6, SNX32, VPS26A, VPS29, VPS35, DRD5, DENND5A, KALRN, RHOG (GDP-bound form). The interaction with SNX2 is reported controversially. Interacts with DNAJC13; prevented by presence of HGS. Interacts with HGS.

Its subcellular location is the endosome membrane. The protein localises to the golgi apparatus. It localises to the trans-Golgi network membrane. The protein resides in the early endosome membrane. It is found in the cell projection. Its subcellular location is the lamellipodium. In terms of biological role, involved in several stages of intracellular trafficking. Interacts with membranes containing phosphatidylinositol 3-phosphate (PtdIns(3P)) or phosphatidylinositol 3,5-bisphosphate (PtdIns(3,5)P2). Acts in part as component of the retromer membrane-deforming SNX-BAR subcomplex. The SNX-BAR retromer mediates retrograde transport of cargo proteins from endosomes to the trans-Golgi network (TGN) and is involved in endosome-to-plasma membrane transport for cargo protein recycling. The SNX-BAR subcomplex functions to deform the donor membrane into a tubular profile called endosome-to-TGN transport carrier (ETC). Can sense membrane curvature and has in vitro vesicle-to-membrane remodeling activity. Involved in retrograde endosome-to-TGN transport of lysosomal enzyme receptors (IGF2R, M6PR and SORT1). Plays a role in targeting ligand-activated EGFR to the lysosomes for degradation after endocytosis from the cell surface and release from the Golgi. Involvement in retromer-independent endocytic trafficking of P2RY1 and lysosomal degradation of protease-activated receptor-1/F2R. Promotes KALRN- and RHOG-dependent but retromer-independent membrane remodeling such as lamellipodium formation; the function is dependent on GEF activity of KALRN. Required for endocytosis of DRD5 upon agonist stimulation but not for basal receptor trafficking. In Mus musculus (Mouse), this protein is Sorting nexin-1 (Snx1).